The following is a 177-amino-acid chain: MSQREKKNQEAVYESESEFIEKLVAIKRTAKVVKGGSRFNFSAIVVVGDGKGSVGYGLGKAKEVPEAIRKATDQAQKQMIKVEIKDGRTIFHETIGRFGAGNVVLRPASAGTGIIAGGSMRPIFEAIGISDVLAKSTGTSNPHNLIKATFAALQNISPPKRVAAKRGLAAKNVRIRD.

One can recognise an S5 DRBM domain in the interval 19–82 (FIEKLVAIKR…DQAQKQMIKV (64 aa)).

It belongs to the universal ribosomal protein uS5 family. In terms of assembly, part of the 30S ribosomal subunit. Contacts proteins S4 and S8.

Its function is as follows. With S4 and S12 plays an important role in translational accuracy. In terms of biological role, located at the back of the 30S subunit body where it stabilizes the conformation of the head with respect to the body. The chain is Small ribosomal subunit protein uS5 from Magnetococcus marinus (strain ATCC BAA-1437 / JCM 17883 / MC-1).